The following is a 115-amino-acid chain: Cytochrome c (115 aa).

Residues C26, C29, H30, and M91 each contribute to the heme c site.

It belongs to the cytochrome c family. Post-translationally, binds 1 heme c group covalently per subunit.

It is found in the mitochondrion intermembrane space. Electron carrier protein. The oxidized form of the cytochrome c heme group can accept an electron from the heme group of the cytochrome c1 subunit of cytochrome reductase. Cytochrome c then transfers this electron to the cytochrome oxidase complex, the final protein carrier in the mitochondrial electron-transport chain. The sequence is that of Cytochrome c from Theileria annulata.